The chain runs to 481 residues: Autolysin (481 aa).

The Peptidase C51 domain maps to 7–142 (KNEFIERLKT…LQDDNMLMIS (136 aa)). One can recognise an N-acetylmuramoyl-L-alanine amidase domain in the interval 198–323 (SNPKGIVIHN…NEFTSTSCPH (126 aa)). An SH3b domain is found at 398 to 466 (EESARFTNGN…YLPIRTWNGS (69 aa)).

It belongs to the N-acetylmuramoyl-L-alanine amidase 2 family.

It is found in the secreted. The catalysed reaction is Hydrolyzes the link between N-acetylmuramoyl residues and L-amino acid residues in certain cell-wall glycopeptides.. Functionally, autolysins are involved in some important biological processes such as cell separation, cell-wall turnover, competence for genetic transformation, formation of the flagella and sporulation. Autolysin strictly depends on the presence of choline-containing cell walls for activity. The chain is Autolysin (lytA) from Staphylococcus aureus.